Consider the following 414-residue polypeptide: Multifunctional CCA protein (414 aa).

Residues Gly8 and Arg11 each contribute to the ATP site. Residues Gly8 and Arg11 each coordinate CTP. Positions 21 and 23 each coordinate Mg(2+). Arg91, Arg137, and Arg140 together coordinate ATP. CTP contacts are provided by Arg91, Arg137, and Arg140. The region spanning 228-329 is the HD domain; it reads TGIHTLLTLA…LKLLDTIDVW (102 aa).

Belongs to the tRNA nucleotidyltransferase/poly(A) polymerase family. Bacterial CCA-adding enzyme type 1 subfamily. As to quaternary structure, monomer. Can also form homodimers and oligomers. The cofactor is Mg(2+). Ni(2+) is required as a cofactor.

It catalyses the reaction a tRNA precursor + 2 CTP + ATP = a tRNA with a 3' CCA end + 3 diphosphate. It carries out the reaction a tRNA with a 3' CCA end + 2 CTP + ATP = a tRNA with a 3' CCACCA end + 3 diphosphate. Its function is as follows. Catalyzes the addition and repair of the essential 3'-terminal CCA sequence in tRNAs without using a nucleic acid template. Adds these three nucleotides in the order of C, C, and A to the tRNA nucleotide-73, using CTP and ATP as substrates and producing inorganic pyrophosphate. tRNA 3'-terminal CCA addition is required both for tRNA processing and repair. Also involved in tRNA surveillance by mediating tandem CCA addition to generate a CCACCA at the 3' terminus of unstable tRNAs. While stable tRNAs receive only 3'-terminal CCA, unstable tRNAs are marked with CCACCA and rapidly degraded. The protein is Multifunctional CCA protein of Edwardsiella ictaluri (strain 93-146).